Here is a 75-residue protein sequence, read N- to C-terminus: Kappa-scoloptoxin(03)-Ssm1e (75 aa).

The N-terminal stretch at 1–23 is a signal peptide; the sequence is MKSSMAILLVMALIIFTLDKNYS.

Belongs to the scoloptoxin-03 family. In terms of processing, contains 3 disulfide bonds. Expressed by the venom gland.

Its subcellular location is the secreted. Functionally, inhibits voltage-gated potassium channels. This Scolopendra mutilans (Chinese red-headed centipede) protein is Kappa-scoloptoxin(03)-Ssm1e.